The chain runs to 125 residues: Large ribosomal subunit protein eL22 (125 aa).

It belongs to the eukaryotic ribosomal protein eL22 family. In terms of assembly, component of the large ribosomal subunit.

The protein localises to the cytoplasm. Functionally, component of the large ribosomal subunit. The ribosome is a large ribonucleoprotein complex responsible for the synthesis of proteins in the cell. The chain is Large ribosomal subunit protein eL22 (rpl22) from Gadus morhua (Atlantic cod).